We begin with the raw amino-acid sequence, 359 residues long: MDFISFKEKEISKKECLELFENTENFFDVIKLADSLRKDIVGDAVTYVVNANINFTNICTGTCGFCAYKAEHGDPHAFFLNPDEVAKKALEARKIGATEVCIQGGLLKEIDTYFQAEILKKVKEITAPYGKIDVHAFSPMEVKSAAENAGLNVKEALKILKESGLNSMPGTAAEILNDEIRSEICPTKLKTSEWIDVVSNAHKTGIKTTCTMMYGHVEENDHLAEHLSILRNIQKETGGFTEFVPLTFLHENAPLYHTERVKSGASGMLDLKVYAISRIFFKDSIKNIQTSWVKLGTKLSQVSLNCGANDIGGTLMEENISKSAGGSYGTYMSEEQLKDMVLAVGRIPKQRNTAYEIIE.

Residues 45-282 (VTYVVNANIN…VYAISRIFFK (238 aa)) enclose the Radical SAM core domain. Positions 59, 63, and 66 each coordinate [4Fe-4S] cluster.

The protein belongs to the radical SAM superfamily. CofH family. In terms of assembly, consists of two subunits, CofG and CofH. It depends on [4Fe-4S] cluster as a cofactor.

It catalyses the reaction 5-amino-6-(D-ribitylamino)uracil + L-tyrosine + S-adenosyl-L-methionine = 5-amino-5-(4-hydroxybenzyl)-6-(D-ribitylimino)-5,6-dihydrouracil + 2-iminoacetate + 5'-deoxyadenosine + L-methionine + H(+). The protein operates within cofactor biosynthesis; coenzyme F0 biosynthesis. In terms of biological role, catalyzes the radical-mediated synthesis of 5-amino-5-(4-hydroxybenzyl)-6-(D-ribitylimino)-5,6-dihydrouracil from 5-amino-6-(D-ribitylamino)uracil and L-tyrosine. The protein is 5-amino-6-(D-ribitylamino)uracil--L-tyrosine 4-hydroxyphenyl transferase of Methanococcus maripaludis (strain C7 / ATCC BAA-1331).